The primary structure comprises 102 residues: Small ribosomal subunit protein uS10 (102 aa).

It belongs to the universal ribosomal protein uS10 family. Part of the 30S ribosomal subunit.

Its function is as follows. Involved in the binding of tRNA to the ribosomes. The sequence is that of Small ribosomal subunit protein uS10 from Leifsonia xyli subsp. xyli (strain CTCB07).